Here is a 597-residue protein sequence, read N- to C-terminus: Aspartate--tRNA ligase (597 aa).

Glu180 contacts L-aspartate. Positions 204–207 are aspartate; it reads QLFK. Arg226 lines the L-aspartate pocket. Residues 226 to 228 and Gln235 contribute to the ATP site; that span reads RDE. His454 is an L-aspartate binding site. Glu488 lines the ATP pocket. Arg495 provides a ligand contact to L-aspartate. Position 540 to 543 (540 to 543) interacts with ATP; the sequence is GLDR.

The protein belongs to the class-II aminoacyl-tRNA synthetase family. Type 1 subfamily. As to quaternary structure, homodimer.

It localises to the cytoplasm. The catalysed reaction is tRNA(Asp) + L-aspartate + ATP = L-aspartyl-tRNA(Asp) + AMP + diphosphate. Catalyzes the attachment of L-aspartate to tRNA(Asp) in a two-step reaction: L-aspartate is first activated by ATP to form Asp-AMP and then transferred to the acceptor end of tRNA(Asp). In Clostridium perfringens (strain ATCC 13124 / DSM 756 / JCM 1290 / NCIMB 6125 / NCTC 8237 / Type A), this protein is Aspartate--tRNA ligase.